A 474-amino-acid polypeptide reads, in one-letter code: tRNA-2-methylthio-N(6)-dimethylallyladenosine synthase (474 aa).

In terms of domain architecture, MTTase N-terminal spans 3 to 120 (KKLHIKTWGC…LPEMINSVRG (118 aa)). The [4Fe-4S] cluster site is built by cysteine 12, cysteine 49, cysteine 83, cysteine 157, cysteine 161, and cysteine 164. Residues 143–375 (RAEGPTAFVS…QERINQQAMA (233 aa)) enclose the Radical SAM core domain. Residues 378-441 (RRMLGTTQRI…PNSLRGKVVR (64 aa)) form the TRAM domain.

Belongs to the methylthiotransferase family. MiaB subfamily. In terms of assembly, monomer. Requires [4Fe-4S] cluster as cofactor.

The protein localises to the cytoplasm. It carries out the reaction N(6)-dimethylallyladenosine(37) in tRNA + (sulfur carrier)-SH + AH2 + 2 S-adenosyl-L-methionine = 2-methylsulfanyl-N(6)-dimethylallyladenosine(37) in tRNA + (sulfur carrier)-H + 5'-deoxyadenosine + L-methionine + A + S-adenosyl-L-homocysteine + 2 H(+). It catalyses the reaction N(6)-dimethylallyladenosine(37) in tRNA + (sulfur carrier)-SH + AH2 + S-adenosyl-L-methionine = 2-thio-N(6)-dimethylallyladenosine(37) in tRNA + (sulfur carrier)-H + 5'-deoxyadenosine + L-methionine + A + H(+). The enzyme catalyses 2-thio-N(6)-dimethylallyladenosine(37) in tRNA + S-adenosyl-L-methionine = 2-methylsulfanyl-N(6)-dimethylallyladenosine(37) in tRNA + S-adenosyl-L-homocysteine + H(+). Catalyzes the methylthiolation of N6-(dimethylallyl)adenosine (i(6)A), leading to the formation of 2-methylthio-N6-(dimethylallyl)adenosine (ms(2)i(6)A) at position 37 in tRNAs that read codons beginning with uridine. This Salmonella typhimurium (strain LT2 / SGSC1412 / ATCC 700720) protein is tRNA-2-methylthio-N(6)-dimethylallyladenosine synthase.